The sequence spans 2820 residues: Neurofibromin (2820 aa).

Ala2 carries the N-acetylalanine modification. Phosphoserine occurs at positions 866 and 878. The region spanning His1253–Ile1463 is the Ras-GAP domain. Residues Glu1561–Lys1719 enclose the CRAL-TRIO domain. A lipid binding region spans residues Glu1561 to Asp1818. A phosphoserine mark is found at Ser2169 and Ser2448. The tract at residues Tyr2457–Glu2482 is disordered. Residues Pro2458–Lys2470 show a composition bias toward basic and acidic residues. A Phosphothreonine modification is found at Thr2495. Phosphoserine is present on residues Ser2496, Ser2502, Ser2504, and Ser2524. The Bipartite nuclear localization signal signature appears at Lys2536 to Arg2552. Phosphothreonine is present on Thr2546. Phosphoserine is present on residues Ser2578, Ser2783, and Ser2798. Positions Thr2768–Val2820 are disordered. The segment covering Leu2782–Ala2808 has biased composition (polar residues).

As to quaternary structure, interacts with HTR6. Interacts with SPRED2. Post-translationally, ubiquitinated by RNF7/RBX2, leading to its degradation.

Its subcellular location is the nucleus. The protein localises to the nucleolus. It localises to the cell membrane. In terms of biological role, stimulates the GTPase activity of Ras. NF1 shows greater affinity for Ras GAP, but lower specific activity. May be a regulator of Ras activity. This chain is Neurofibromin (Nf1), found in Rattus norvegicus (Rat).